Here is a 77-residue protein sequence, read N- to C-terminus: Small nuclear ribonucleoprotein G (77 aa).

A Sm domain is found at 2–77 (VSTPELKKYM…IISLEALDAI (76 aa)).

The protein belongs to the snRNP Sm proteins family. Component of the Sm core complex, present in spliceosomal snRNP U1, U2, U4/U6 and U5. The core complex contains SMB1, SMD1, SMD2, SMD3, SME1, SMX3 and SMX2 (Sm proteins B, D1, D2, D3, E, F and G, respectively), and is probably a heptameric ring structure. SMX2 specifically interacts with SME1. Belongs to the CWC complex (or CEF1-associated complex), a spliceosome sub-complex reminiscent of a late-stage spliceosome composed of the U2, U5 and U6 snRNAs and at least BUD13, BUD31, BRR2, CDC40, CEF1, CLF1, CUS1, CWC2, CWC15, CWC21, CWC22, CWC23, CWC24, CWC25, CWC27, ECM2, HSH155, IST3, ISY1, LEA1, MSL1, NTC20, PRP8, PRP9, PRP11, PRP19, PRP21, PRP22, PRP45, PRP46, SLU7, SMB1, SMD1, SMD2, SMD3, SMX2, SMX3, SNT309, SNU114, SPP2, SYF1, SYF2, RSE1 and YJU2. Component of the U4/U6-U5 tri-snRNP complex composed of the U4, U6 and U5 snRNAs and at least PRP3, PRP4, PRP6, PRP8, PRP18, PRP31, PRP38, SNU13, SNU23, SNU66, SNU114, SPP381, SMB1, SMD1, SMD2, SMD3, SMX2, SMX3, LSM2, LSM3, LSM4, LSM5, LSM6, LSM7, LSM8, BRR2 and DIB1.

Its subcellular location is the nucleus. The protein resides in the cytoplasm. Its function is as follows. Plays a role in pre-mRNA splicing as a core component of the spliceosomal U1, U2, U4 and U5 small nuclear ribonucleoproteins (snRNPs), the building blocks of the spliceosome. The sequence is that of Small nuclear ribonucleoprotein G (SMX2) from Saccharomyces cerevisiae (strain ATCC 204508 / S288c) (Baker's yeast).